Here is a 210-residue protein sequence, read N- to C-terminus: 2-Cys peroxiredoxin BAS1, chloroplastic (210 aa).

The transit peptide at 1-10 (DARARSFVAR) directs the protein to the chloroplast. Positions 18–177 (PLVGNKAPDF…TLRTLQALQY (160 aa)) constitute a Thioredoxin domain. Residue cysteine 64 is the Cysteine sulfenic acid (-SOH) intermediate of the active site.

Belongs to the peroxiredoxin family. AhpC/Prx1 subfamily. Homodimer; disulfide-linked, upon oxidation. As to expression, expressed in leaf blade, sheath, basiplast, stem and green spike. Maximal expression in young developing shoots segments where cell division and elongation take place. Not expressed in roots.

It is found in the plastid. The protein resides in the chloroplast. The catalysed reaction is a hydroperoxide + [thioredoxin]-dithiol = an alcohol + [thioredoxin]-disulfide + H2O. Functionally, thiol-specific peroxidase that catalyzes the reduction of hydrogen peroxide and organic hydroperoxides to water and alcohols, respectively. Plays a role in cell protection against oxidative stress by detoxifying peroxides. May be an antioxidant enzyme particularly in the developing shoot and photosynthesizing leaf. This Hordeum vulgare (Barley) protein is 2-Cys peroxiredoxin BAS1, chloroplastic (BAS1).